Reading from the N-terminus, the 631-residue chain is Phosphomethylpyrimidine synthase (631 aa).

The segment at 54–80 is disordered; the sequence is TLVGGDKDKPRYETNEPIPVYDTSGPY. The segment covering 58–67 has biased composition (basic and acidic residues); sequence GDKDKPRYET. Substrate is bound by residues asparagine 239, methionine 268, tyrosine 297, histidine 333, 353–355, 394–397, and glutamate 433; these read SRG and DGLR. Histidine 437 is a Zn(2+) binding site. Tyrosine 460 provides a ligand contact to substrate. Residue histidine 501 participates in Zn(2+) binding. The [4Fe-4S] cluster site is built by cysteine 581, cysteine 584, and cysteine 589.

This sequence belongs to the ThiC family. In terms of assembly, homodimer. [4Fe-4S] cluster serves as cofactor.

It catalyses the reaction 5-amino-1-(5-phospho-beta-D-ribosyl)imidazole + S-adenosyl-L-methionine = 4-amino-2-methyl-5-(phosphooxymethyl)pyrimidine + CO + 5'-deoxyadenosine + formate + L-methionine + 3 H(+). It participates in cofactor biosynthesis; thiamine diphosphate biosynthesis. Its function is as follows. Catalyzes the synthesis of the hydroxymethylpyrimidine phosphate (HMP-P) moiety of thiamine from aminoimidazole ribotide (AIR) in a radical S-adenosyl-L-methionine (SAM)-dependent reaction. This is Phosphomethylpyrimidine synthase from Klebsiella pneumoniae subsp. pneumoniae (strain ATCC 700721 / MGH 78578).